The following is a 123-amino-acid chain: Small ribosomal subunit protein uS17 (123 aa).

Belongs to the universal ribosomal protein uS17 family. In terms of assembly, part of the 30S ribosomal subunit.

Its function is as follows. One of the primary rRNA binding proteins, it binds specifically to the 5'-end of 16S ribosomal RNA. The chain is Small ribosomal subunit protein uS17 from Pyrobaculum aerophilum (strain ATCC 51768 / DSM 7523 / JCM 9630 / CIP 104966 / NBRC 100827 / IM2).